The primary structure comprises 833 residues: Leucine--tRNA ligase (833 aa).

The short motif at 41 to 52 (PYPSGAGLHVGH) is the 'HIGH' region element. The 'KMSKS' region signature appears at 610-614 (KMSKS). Lysine 613 is a binding site for ATP.

It belongs to the class-I aminoacyl-tRNA synthetase family.

It localises to the cytoplasm. It catalyses the reaction tRNA(Leu) + L-leucine + ATP = L-leucyl-tRNA(Leu) + AMP + diphosphate. The protein is Leucine--tRNA ligase of Streptococcus equi subsp. equi (strain 4047).